Reading from the N-terminus, the 102-residue chain is Small ribosomal subunit protein uS14 (102 aa).

This sequence belongs to the universal ribosomal protein uS14 family. In terms of assembly, part of the 30S ribosomal subunit. Contacts proteins S3 and S10.

Functionally, binds 16S rRNA, required for the assembly of 30S particles and may also be responsible for determining the conformation of the 16S rRNA at the A site. This Ehrlichia ruminantium (strain Gardel) protein is Small ribosomal subunit protein uS14.